Consider the following 273-residue polypeptide: Ribosomal RNA small subunit methyltransferase A (273 aa).

6 residues coordinate S-adenosyl-L-methionine: Asn18, Leu20, Gly45, Glu66, Asp91, and Asn113.

Belongs to the class I-like SAM-binding methyltransferase superfamily. rRNA adenine N(6)-methyltransferase family. RsmA subfamily.

The protein localises to the cytoplasm. It carries out the reaction adenosine(1518)/adenosine(1519) in 16S rRNA + 4 S-adenosyl-L-methionine = N(6)-dimethyladenosine(1518)/N(6)-dimethyladenosine(1519) in 16S rRNA + 4 S-adenosyl-L-homocysteine + 4 H(+). In terms of biological role, specifically dimethylates two adjacent adenosines (A1518 and A1519) in the loop of a conserved hairpin near the 3'-end of 16S rRNA in the 30S particle. May play a critical role in biogenesis of 30S subunits. The protein is Ribosomal RNA small subunit methyltransferase A of Salmonella typhimurium (strain LT2 / SGSC1412 / ATCC 700720).